A 417-amino-acid chain; its full sequence is NADH-quinone oxidoreductase subunit D (417 aa).

This sequence belongs to the complex I 49 kDa subunit family. In terms of assembly, NDH-1 is composed of 14 different subunits. Subunits NuoB, C, D, E, F, and G constitute the peripheral sector of the complex.

It is found in the cell inner membrane. It carries out the reaction a quinone + NADH + 5 H(+)(in) = a quinol + NAD(+) + 4 H(+)(out). In terms of biological role, NDH-1 shuttles electrons from NADH, via FMN and iron-sulfur (Fe-S) centers, to quinones in the respiratory chain. The immediate electron acceptor for the enzyme in this species is believed to be ubiquinone. Couples the redox reaction to proton translocation (for every two electrons transferred, four hydrogen ions are translocated across the cytoplasmic membrane), and thus conserves the redox energy in a proton gradient. The polypeptide is NADH-quinone oxidoreductase subunit D (Chromobacterium violaceum (strain ATCC 12472 / DSM 30191 / JCM 1249 / CCUG 213 / NBRC 12614 / NCIMB 9131 / NCTC 9757 / MK)).